The primary structure comprises 297 residues: Cytosolic Fe-S cluster assembly factor CFD1 (297 aa).

15–22 (GKGGVGKS) provides a ligand contact to ATP. Residues cysteine 216 and cysteine 219 each coordinate [4Fe-4S] cluster.

The protein belongs to the Mrp/NBP35 ATP-binding proteins family. NUBP2/CFD1 subfamily. As to quaternary structure, heterotetramer of 2 NBP35 and 2 CFD1 chains. [4Fe-4S] cluster serves as cofactor.

The protein localises to the cytoplasm. Component of the cytosolic iron-sulfur (Fe/S) protein assembly (CIA) machinery. Required for maturation of extramitochondrial Fe-S proteins. The NBP35-CFD1 heterotetramer forms a Fe-S scaffold complex, mediating the de novo assembly of an Fe-S cluster and its transfer to target apoproteins. This Phaeosphaeria nodorum (strain SN15 / ATCC MYA-4574 / FGSC 10173) (Glume blotch fungus) protein is Cytosolic Fe-S cluster assembly factor CFD1.